Reading from the N-terminus, the 562-residue chain is Formate--tetrahydrofolate ligase (562 aa).

Residue 71 to 78 (TPAGEGKS) coordinates ATP.

This sequence belongs to the formate--tetrahydrofolate ligase family.

It catalyses the reaction (6S)-5,6,7,8-tetrahydrofolate + formate + ATP = (6R)-10-formyltetrahydrofolate + ADP + phosphate. It participates in one-carbon metabolism; tetrahydrofolate interconversion. The polypeptide is Formate--tetrahydrofolate ligase (Bacillus cereus (strain Q1)).